A 167-amino-acid chain; its full sequence is 3-isopropylmalate dehydratase small subunit (167 aa).

This sequence belongs to the LeuD family. LeuD type 2 subfamily. In terms of assembly, heterodimer of LeuC and LeuD.

The enzyme catalyses (2R,3S)-3-isopropylmalate = (2S)-2-isopropylmalate. It participates in amino-acid biosynthesis; L-leucine biosynthesis; L-leucine from 3-methyl-2-oxobutanoate: step 2/4. Catalyzes the isomerization between 2-isopropylmalate and 3-isopropylmalate, via the formation of 2-isopropylmaleate. This chain is 3-isopropylmalate dehydratase small subunit, found in Nitratidesulfovibrio vulgaris (strain ATCC 29579 / DSM 644 / CCUG 34227 / NCIMB 8303 / VKM B-1760 / Hildenborough) (Desulfovibrio vulgaris).